Reading from the N-terminus, the 228-residue chain is MTRSLKTTLILLASSVISMSALAEFKQAPLPYATNALQPAIDQQTMEIHYGKHHKAYVDNLNAQIKTYPELDKTDLIQLQKQISKYNTAVRNNGGGHFNHTFFWESLAATNKTGQPSPALVKQITQDFGSLDAFKQKFNEAASGRFGSGWAWLIVTPNGKLAVTSTPNQDNPLMDLSETKGTPLLGLDVWEHAYYLKYQNRRADYIKAFWSVVNWNKVNERYNEAIKK.

The signal sequence occupies residues 1–23 (MTRSLKTTLILLASSVISMSALA). Positions 49, 100, 188, and 192 each coordinate Mn(2+).

It belongs to the iron/manganese superoxide dismutase family. Mn(2+) is required as a cofactor.

The protein resides in the periplasm. The enzyme catalyses 2 superoxide + 2 H(+) = H2O2 + O2. In terms of biological role, destroys superoxide anion radicals which are normally produced within the cells and which are toxic to biological systems. The sequence is that of Superoxide dismutase [Mn] (sodA) from Acinetobacter baylyi (strain ATCC 33305 / BD413 / ADP1).